A 149-amino-acid chain; its full sequence is Transcription factor MafF (149 aa).

Residues 51–76 form a basic motif region; that stretch reads RLKQRRRTLKNRGYAASCRVKRVCQK. Residues 51–114 enclose the bZIP domain; sequence RLKQRRRTLK…DTLRGKYEAL (64 aa). The leucine-zipper stretch occupies residues 79-93; sequence LQKQKMELEWEVDKL.

It belongs to the bZIP family. Maf subfamily. Monomer and homo- or heterodimer. As to expression, highly expressed in the ovary, lower expression in the brain, heart and mesenterium.

It is found in the nucleus. In terms of biological role, since it lacks a putative transactivation domain, it may behave as a transcriptional repressor when it dimerizes among itself. May also serve as a transcriptional activator by dimerizing with other (usually larger) basic-zipper proteins and recruiting them to specific DNA-binding sites. May be involved in the cellular stress response. This Gallus gallus (Chicken) protein is Transcription factor MafF (MAFF).